A 247-amino-acid chain; its full sequence is HTH-type transcriptional regulator SarU (247 aa).

DNA-binding regions (H-T-H motif) lie at residues 53 to 76 (LKEI…SLSK) and 178 to 201 (LKDL…RLNN).

It belongs to the SarA family.

Its subcellular location is the cytoplasm. Its function is as follows. Positive regulator of RNAII and RNAIII in a cell density-dependent manner. It can contribute to the expression of virulence genes controlled by agr. May also regulate target genes via an agr-independent pathway. This Staphylococcus aureus (strain NCTC 8325 / PS 47) protein is HTH-type transcriptional regulator SarU (sarU).